An 84-amino-acid polypeptide reads, in one-letter code: UPF0457 protein BALH_2270 (84 aa).

Belongs to the UPF0457 family.

The chain is UPF0457 protein BALH_2270 from Bacillus thuringiensis (strain Al Hakam).